Here is an 89-residue protein sequence, read N- to C-terminus: Small ribosomal subunit protein uS15 (89 aa).

The protein belongs to the universal ribosomal protein uS15 family. In terms of assembly, part of the 30S ribosomal subunit. Forms a bridge to the 50S subunit in the 70S ribosome, contacting the 23S rRNA.

One of the primary rRNA binding proteins, it binds directly to 16S rRNA where it helps nucleate assembly of the platform of the 30S subunit by binding and bridging several RNA helices of the 16S rRNA. Functionally, forms an intersubunit bridge (bridge B4) with the 23S rRNA of the 50S subunit in the ribosome. This Mesorhizobium japonicum (strain LMG 29417 / CECT 9101 / MAFF 303099) (Mesorhizobium loti (strain MAFF 303099)) protein is Small ribosomal subunit protein uS15.